The primary structure comprises 302 residues: Putative cyclin-D6-1 (302 aa).

This sequence belongs to the cyclin family. Cyclin D subfamily.

The sequence is that of Putative cyclin-D6-1 (CYCD6-1) from Arabidopsis thaliana (Mouse-ear cress).